Here is a 512-residue protein sequence, read N- to C-terminus: ADP,ATP carrier protein 4 (512 aa).

11 helical membrane-spanning segments follow: residues 34–54 (ISKF…QNLI), 71–91 (ISFL…VIYV), 102–122 (IFYL…YVIF), 157–177 (FSLF…LLFW), 192–212 (FYPL…HFLE), 231–251 (FHTL…IVSI), 296–316 (LIAT…GPWK), 330–350 (AAFI…FVLL), 361–381 (FTSA…FFAV), 390–410 (LIIA…IGAI), and 476–496 (SISI…IWAT).

It belongs to the ADP/ATP translocase tlc family.

The protein localises to the cell membrane. Functionally, provides the rickettsial cell with host ATP in exchange for rickettsial ADP. This is an obligate exchange system. This energy acquiring activity is an important component of rickettsial parasitism. This is ADP,ATP carrier protein 4 (tlcD) from Rickettsia prowazekii (strain Madrid E).